A 221-amino-acid polypeptide reads, in one-letter code: Urease accessory protein UreF (221 aa).

Belongs to the UreF family. As to quaternary structure, ureD, UreF and UreG form a complex that acts as a GTP-hydrolysis-dependent molecular chaperone, activating the urease apoprotein by helping to assemble the nickel containing metallocenter of UreC. The UreE protein probably delivers the nickel.

It localises to the cytoplasm. Required for maturation of urease via the functional incorporation of the urease nickel metallocenter. This is Urease accessory protein UreF from Aliivibrio fischeri (strain ATCC 700601 / ES114) (Vibrio fischeri).